The chain runs to 452 residues: Chaperone SurA (452 aa).

The N-terminal stretch at 1 to 28 is a signal peptide; that stretch reads MKKTLRFAAVVSSLAASAALLVAAPAAA. PpiC domains follow at residues 186 to 288 and 302 to 400; these read QQDL…RLVD and IVQT…QVLN.

The protein resides in the periplasm. It catalyses the reaction [protein]-peptidylproline (omega=180) = [protein]-peptidylproline (omega=0). In terms of biological role, chaperone involved in the correct folding and assembly of outer membrane proteins. Recognizes specific patterns of aromatic residues and the orientation of their side chains, which are found more frequently in integral outer membrane proteins. May act in both early periplasmic and late outer membrane-associated steps of protein maturation. The sequence is that of Chaperone SurA from Burkholderia orbicola (strain AU 1054).